The following is a 213-amino-acid chain: Ras-related protein Rab-25 (213 aa).

Residues serine 21, glycine 24, lysine 25, threonine 26, asparagine 27, serine 38, histidine 39, threonine 43, and threonine 44 each contribute to the GTP site. Threonine 26 lines the Mg(2+) pocket. Short sequence motifs (switch) lie at residues 35–49 and 67–84; these read NEFSHDSRTTIGVEF and DTAGLERYRAITSAYYRG. The Mg(2+) site is built by threonine 44 and aspartate 67. GTP is bound by residues glycine 70, asparagine 125, lysine 126, aspartate 128, alanine 156, and leucine 157. 2 S-geranylgeranyl cysteine lipidation sites follow: cysteine 209 and cysteine 210. Cysteine methyl ester is present on cysteine 210. The propeptide at 211 to 213 is removed in mature form; sequence ISL.

Belongs to the small GTPase superfamily. Rab family. As to quaternary structure, interacts (GTP-bound form) with RAB11FIP1, RAB11FIP2, RAB11FIP3 and RAB11FIP4. Interacts (via the hypervariable C-terminal region) with ITGB1 (via the cytoplasmic region); the interaction is GTP-dependent. Interacts with ITGAV. Associates with the integrin alpha-V/beta-1 heterodimer. Interacts with VPS33B. Requires Mg(2+) as cofactor.

Its subcellular location is the cell membrane. It localises to the cell projection. It is found in the pseudopodium membrane. The protein resides in the cytoplasmic vesicle. It catalyses the reaction GTP + H2O = GDP + phosphate + H(+). Regulated by guanine nucleotide exchange factors (GEFs) which promote the exchange of bound GDP for free GTP. Regulated by GTPase activating proteins (GAPs) which increase the GTP hydrolysis activity. Inhibited by GDP dissociation inhibitors (GDIs) which prevent Rab-GDP dissociation. Its function is as follows. The small GTPases Rab are key regulators of intracellular membrane trafficking, from the formation of transport vesicles to their fusion with membranes. Rabs cycle between an inactive GDP-bound form and an active GTP-bound form that is able to recruit to membranes different set of downstream effectors directly responsible for vesicle formation, movement, tethering and fusion. RAB25 regulates epithelial cell differentiation, proliferation and survival, thereby playing key roles in tumorigenesis. Promotes invasive migration of cells in which it functions to localize and maintain integrin alpha-V/beta-1 at the tips of extending pseudopodia. Involved in the regulation of epithelial morphogenesis through the control of CLDN4 expression and localization at tight junctions. May selectively regulate the apical recycling pathway. Together with MYO5B regulates transcytosis. This chain is Ras-related protein Rab-25 (RAB25), found in Bos taurus (Bovine).